We begin with the raw amino-acid sequence, 434 residues long: Monodehydroascorbate reductase 1, peroxisomal (434 aa).

FAD contacts are provided by residues 13–16, E40, R47, K52, I95, and 146–147; these read GGVS and RE. NAD(+) is bound by residues 171–177, E195, R201, and G260; that span reads GGYIGLE. 173-177 is an NADP(+) binding site; sequence YIGLE. 2 residues coordinate NADP(+): R201 and G260. D297 provides a ligand contact to FAD. 313–314 contributes to the NAD(+) binding site; it reads EH. Residue 313–314 coordinates NADP(+); that stretch reads EH. V315 is an FAD binding site. R319 lines the L-ascorbate pocket. Y348 provides a ligand contact to FAD. An NAD(+)-binding site is contributed by Y348. Y348 lines the NADP(+) pocket. Residue R350 participates in L-ascorbate binding. At S416 the chain carries Phosphoserine.

This sequence belongs to the FAD-dependent oxidoreductase family. FAD is required as a cofactor.

The protein resides in the peroxisome matrix. It catalyses the reaction 2 monodehydro-L-ascorbate radical + NADH + H(+) = 2 L-ascorbate + NAD(+). Catalyzes the conversion of monodehydroascorbate to ascorbate, oxidizing NADH in the process. The chain is Monodehydroascorbate reductase 1, peroxisomal from Arabidopsis thaliana (Mouse-ear cress).